The chain runs to 87 residues: DNA-directed RNA polymerase subunit omega (87 aa).

This sequence belongs to the RNA polymerase subunit omega family. As to quaternary structure, the RNAP catalytic core consists of 2 alpha, 1 beta, 1 beta' and 1 omega subunit. When a sigma factor is associated with the core the holoenzyme is formed, which can initiate transcription.

It catalyses the reaction RNA(n) + a ribonucleoside 5'-triphosphate = RNA(n+1) + diphosphate. Functionally, promotes RNA polymerase assembly. Latches the N- and C-terminal regions of the beta' subunit thereby facilitating its interaction with the beta and alpha subunits. The sequence is that of DNA-directed RNA polymerase subunit omega from Alcanivorax borkumensis (strain ATCC 700651 / DSM 11573 / NCIMB 13689 / SK2).